A 231-amino-acid chain; its full sequence is Enolase-phosphatase E1 (231 aa).

The protein belongs to the HAD-like hydrolase superfamily. MasA/MtnC family. As to quaternary structure, monomer. It depends on Mg(2+) as a cofactor.

The catalysed reaction is 5-methylsulfanyl-2,3-dioxopentyl phosphate + H2O = 1,2-dihydroxy-5-(methylsulfanyl)pent-1-en-3-one + phosphate. The protein operates within amino-acid biosynthesis; L-methionine biosynthesis via salvage pathway; L-methionine from S-methyl-5-thio-alpha-D-ribose 1-phosphate: step 3/6. It functions in the pathway amino-acid biosynthesis; L-methionine biosynthesis via salvage pathway; L-methionine from S-methyl-5-thio-alpha-D-ribose 1-phosphate: step 4/6. Its function is as follows. Bifunctional enzyme that catalyzes the enolization of 2,3-diketo-5-methylthiopentyl-1-phosphate (DK-MTP-1-P) into the intermediate 2-hydroxy-3-keto-5-methylthiopentenyl-1-phosphate (HK-MTPenyl-1-P), which is then dephosphorylated to form the acireductone 1,2-dihydroxy-3-keto-5-methylthiopentene (DHK-MTPene). The sequence is that of Enolase-phosphatase E1 from Granulibacter bethesdensis (strain ATCC BAA-1260 / CGDNIH1).